A 348-amino-acid polypeptide reads, in one-letter code: Phosphoribosylformylglycinamidine cyclo-ligase (348 aa).

It belongs to the AIR synthase family.

The protein resides in the cytoplasm. The enzyme catalyses 2-formamido-N(1)-(5-O-phospho-beta-D-ribosyl)acetamidine + ATP = 5-amino-1-(5-phospho-beta-D-ribosyl)imidazole + ADP + phosphate + H(+). It functions in the pathway purine metabolism; IMP biosynthesis via de novo pathway; 5-amino-1-(5-phospho-D-ribosyl)imidazole from N(2)-formyl-N(1)-(5-phospho-D-ribosyl)glycinamide: step 2/2. The protein is Phosphoribosylformylglycinamidine cyclo-ligase of Sorangium cellulosum (strain So ce56) (Polyangium cellulosum (strain So ce56)).